The primary structure comprises 171 residues: uncharacterized protein (171 aa).

This is an uncharacterized protein from Haemophilus influenzae (strain ATCC 51907 / DSM 11121 / KW20 / Rd).